The following is a 96-amino-acid chain: Ferredoxin (96 aa).

One can recognise a 2Fe-2S ferredoxin-type domain in the interval 4 to 94 (YKVKLLTPEG…DVVIETHKEE (91 aa)). Positions 40, 45, 48, and 78 each coordinate [2Fe-2S] cluster.

It belongs to the 2Fe2S plant-type ferredoxin family. [2Fe-2S] cluster serves as cofactor.

It localises to the plastid. The protein localises to the chloroplast. In terms of biological role, ferredoxins are iron-sulfur proteins that transfer electrons in a wide variety of metabolic reactions. The sequence is that of Ferredoxin from Panax ginseng (Korean ginseng).